The chain runs to 318 residues: Aspartate carbamoyltransferase catalytic subunit (318 aa).

Carbamoyl phosphate is bound by residues Arg55 and Thr56. Residue Lys83 coordinates L-aspartate. Residues Arg105, His138, and Gln141 each coordinate carbamoyl phosphate. Residues Arg171 and Arg225 each contribute to the L-aspartate site. The carbamoyl phosphate site is built by Gly266 and Pro267.

The protein belongs to the aspartate/ornithine carbamoyltransferase superfamily. ATCase family. In terms of assembly, heterododecamer (2C3:3R2) of six catalytic PyrB chains organized as two trimers (C3), and six regulatory PyrI chains organized as three dimers (R2).

The catalysed reaction is carbamoyl phosphate + L-aspartate = N-carbamoyl-L-aspartate + phosphate + H(+). The protein operates within pyrimidine metabolism; UMP biosynthesis via de novo pathway; (S)-dihydroorotate from bicarbonate: step 2/3. In terms of biological role, catalyzes the condensation of carbamoyl phosphate and aspartate to form carbamoyl aspartate and inorganic phosphate, the committed step in the de novo pyrimidine nucleotide biosynthesis pathway. The polypeptide is Aspartate carbamoyltransferase catalytic subunit (Corynebacterium kroppenstedtii (strain DSM 44385 / JCM 11950 / CIP 105744 / CCUG 35717)).